We begin with the raw amino-acid sequence, 288 residues long: Cyclin-dependent kinase 2 homolog (288 aa).

Positions tyrosine 4 to phenylalanine 284 constitute a Protein kinase domain. Residues isoleucine 10 to valine 18 and lysine 32 each bind ATP. Threonine 14 carries the phosphothreonine modification. Tyrosine 15 carries the phosphotyrosine modification. Aspartate 125 serves as the catalytic Proton acceptor. Residue threonine 158 is modified to Phosphothreonine.

The protein belongs to the protein kinase superfamily. CMGC Ser/Thr protein kinase family. CDC2/CDKX subfamily. As to quaternary structure, may form a complex composed of at least the catalytic subunit CRK2 and a cyclin. Requires Mg(2+) as cofactor.

It localises to the cytoplasm. The catalysed reaction is L-seryl-[protein] + ATP = O-phospho-L-seryl-[protein] + ADP + H(+). The enzyme catalyses L-threonyl-[protein] + ATP = O-phospho-L-threonyl-[protein] + ADP + H(+). It catalyses the reaction [DNA-directed RNA polymerase] + ATP = phospho-[DNA-directed RNA polymerase] + ADP + H(+). Its activity is regulated as follows. Phosphorylation at Thr-14 or Tyr-15 inactivates the enzyme, while phosphorylation at Thr-158 activates it. Functionally, serine/threonine-protein kinase. Involved in the control of the cell cycle. Required for entry into S-phase and mitosis. Probable component of the kinase complex that phosphorylates the repetitive C-terminus of RNA polymerase II. The sequence is that of Cyclin-dependent kinase 2 homolog from Plasmodium vivax.